The sequence spans 341 residues: MDKLVSILVPCYKSKPFLKRFFNSLLKQDLNQAKIIFFNDNVADETYEVLQKFKKEHNNLAIEVYCDKQNEGIGKVRDKLVNLVTTPYFYFIDPDDCFNNKNVIKEIVESIKKEDFDLGVLKSMVYLCFLKHDFIIKFLPLKGIFQGRVKLINNNNVNKLNYIKNNDQYIWNIVINTDFFRKLNLTFESRLFEDIPIWYPMFFSSQKIVFIDVIGTNYFIRNDSLSTTISAPRYLNLIQCYEKLYVNLSQNGSLASFIDPNHKIEARFWRRQMFVWFALFSFEYFKKNFSESKKILEKLFVFLEKNGVYERVFQTKNQGIYYIWVQRLKYFKHVLESKSDN.

Belongs to the glycosyltransferase 2 family. Requires Mg(2+) as cofactor.

Its subcellular location is the cell membrane. The enzyme catalyses a 1,2-diacyl-sn-glycerol + UDP-alpha-D-glucose = a 1,2-diacyl-3-O-(beta-D-glucopyranosyl)-sn-glycerol + UDP + H(+). It catalyses the reaction a 1,2-diacyl-sn-glycerol + UDP-alpha-D-galactose = a 1,2-diacyl-3-O-(beta-D-galactosyl)-sn-glycerol + UDP + H(+). The catalysed reaction is a 1,2-diacyl-3-O-(beta-D-glucopyranosyl)-sn-glycerol + UDP-alpha-D-glucose = a 1,2-diacyl-3-O-(beta-D-Glc-(1-&gt;6)-beta-D-Glc)-sn-glycerol + UDP + H(+). It carries out the reaction a 1,2-diacyl-3-O-(beta-D-galactosyl)-sn-glycerol + UDP-alpha-D-galactose = a 1,2-diacyl-3-O-[beta-D-galactosyl-(1-&gt;6)-beta-D-galactosyl]-sn-glycerol + UDP + H(+). Its pathway is glycolipid metabolism; diglucosyl-diacylglycerol biosynthesis. With respect to regulation, activated by the negatively charged lipid dioleoylphosphatidylglycerol (DOPG) and inhibited by N-(n-nonyl)deoxygalactonojirimycin (C9J). Functionally, processive glycosyltransferase involved in the biosynthesis of both the non-bilayer-prone beta-monoglycosyldiacylglycerol and the bilayer-forming membrane lipid beta-diglycosyldiacylglycerol. These components contribute to regulate the properties and stability of the membrane. Catalyzes sequentially the transfers of glucosyl or galactosyl residues from UDP-Glc or UDP-Gal to diacylglycerol (DAG) acceptor to form the corresponding beta-glycosyl-DAG (3-O-(beta-D-glycopyranosyl)-1,2-diacyl-sn-glycerol), which then acts as acceptor to give beta-diglycosyl-DAG product (3-O-(beta-D-glycopyranosyl-beta-(1-&gt;6)-D-glycopyranosyl)-1,2-diacyl-sn-glycerol). Dioleoylglycerol (DOG) is a preferred sugar acceptor than 3-O-(beta-D-glucopyranosyl)-1,2-dioleoyl-sn-glycerol. In Mycoplasma genitalium (strain ATCC 33530 / DSM 19775 / NCTC 10195 / G37) (Mycoplasmoides genitalium), this protein is Processive diacylglycerol beta-glycosyltransferase.